The primary structure comprises 477 residues: Aspartyl/glutamyl-tRNA(Asn/Gln) amidotransferase subunit B (477 aa).

It belongs to the GatB/GatE family. GatB subfamily. As to quaternary structure, heterotrimer of A, B and C subunits.

It catalyses the reaction L-glutamyl-tRNA(Gln) + L-glutamine + ATP + H2O = L-glutaminyl-tRNA(Gln) + L-glutamate + ADP + phosphate + H(+). It carries out the reaction L-aspartyl-tRNA(Asn) + L-glutamine + ATP + H2O = L-asparaginyl-tRNA(Asn) + L-glutamate + ADP + phosphate + 2 H(+). Functionally, allows the formation of correctly charged Asn-tRNA(Asn) or Gln-tRNA(Gln) through the transamidation of misacylated Asp-tRNA(Asn) or Glu-tRNA(Gln) in organisms which lack either or both of asparaginyl-tRNA or glutaminyl-tRNA synthetases. The reaction takes place in the presence of glutamine and ATP through an activated phospho-Asp-tRNA(Asn) or phospho-Glu-tRNA(Gln). The polypeptide is Aspartyl/glutamyl-tRNA(Asn/Gln) amidotransferase subunit B (Oenococcus oeni (strain ATCC BAA-331 / PSU-1)).